Reading from the N-terminus, the 504-residue chain is MKYNNEKKKGGSFKRGGKKGSNERDPFFEEEPKKRRKVSYDDDDIESVDSDAEENGFTGGDEDGRRVDGEVEDEDEFADETAGEKRKRLAEEMLNRRREAMRREREEADNDDDDDEDDDETIKKSLMQKQQEDSGRIRRLIASRVQEPLSTDGFSVIVKHRRSVVSVALSDDDSRGFSASKDGTIMHWDVSSGKTDKYIWPSDEILKSHGMKLREPRNKNHSRESLALAVSSDGRYLATGGVDRHVHIWDVRTREHVQAFPGHRNTVSCLCFRYGTSELYSGSFDRTVKVWNVEDKAFITENHGHQGEILAIDALRKERALTVGRDRTMLYHKVPESTRMIYRAPASSLESCCFISDNEYLSGSDNGTVALWGMLKKKPVFVFKNAHQDIPDGITTNGILENGDHEPVNNNCSANSWVNAVATSRGSDLAASGAGNGFVRLWAVETNAIRPLYELPLTGFVNSLAFAKSGKFLIAGVGQETRFGRWGCLKSAQNGVAIHPLRLA.

Residues 1–120 are disordered; that stretch reads MKYNNEKKKG…DDDDDEDDDE (120 aa). Basic and acidic residues predominate over residues 20–33; the sequence is GSNERDPFFEEEPK. 2 stretches are compositionally biased toward acidic residues: residues 41 to 54 and 70 to 81; these read DDDD…DAEE and EVEDEDEFADET. Residues 89–106 show a composition bias toward basic and acidic residues; sequence LAEEMLNRRREAMRRERE. Acidic residues predominate over residues 107 to 120; it reads EADNDDDDDEDDDE. 7 WD repeats span residues 159-198, 220-259, 262-301, 304-342, 344-382, 413-452, and 456-496; these read KHRR…TDKY, NHSR…HVQA, GHRN…FITE, GHQG…RMIY, APAS…PVFV, SANS…IRPL, and PLTG…QNGV.

The protein belongs to the WD repeat RRP9 family. Expressed in tissues with active in cell division such as shoot apexes, root tips, lateral root primordia, embryos, endosperm, pollen grains and embryo sacs.

It localises to the nucleus. It is found in the nucleolus. In terms of biological role, component of a nucleolar small nuclear ribonucleoprotein particle (snoRNP) thought to participate in the processing and modification of pre-ribosomal RNA. Essential for embryogenesis. Plays a critical role in embryo sac development and gametic cell fate. Required for the correct positioning of the first division plane of zygote. May function during early embryogenesis. The protein is U3 snoRNP-associated protein-like YAO of Arabidopsis thaliana (Mouse-ear cress).